We begin with the raw amino-acid sequence, 148 residues long: UPF0756 membrane protein YeaL (148 aa).

The next 4 membrane-spanning stretches (helical) occupy residues 14 to 34, 51 to 71, 86 to 106, and 121 to 141; these read ALGF…LIIV, LSIG…SGTL, LVAI…VTLM, and VLGV…AGLV.

This sequence belongs to the UPF0756 family.

It is found in the cell membrane. This chain is UPF0756 membrane protein YeaL, found in Shigella boydii serotype 18 (strain CDC 3083-94 / BS512).